A 469-amino-acid chain; its full sequence is Endoplasmic reticulum oxidoreductin-1 (469 aa).

The signal sequence occupies residues 1–36; it reads MGKGAIKEEESEKKRKTWRWPLATLVVVFLAVAVSS. Cystine bridges form between cysteine 52/cysteine 71, cysteine 54/cysteine 69, cysteine 108/cysteine 372, cysteine 117/cysteine 122, cysteine 222/cysteine 231, and cysteine 375/cysteine 378. FAD is bound by residues arginine 201, threonine 203, and tryptophan 214. Residues serine 242, histidine 245, arginine 275, and arginine 282 each contribute to the FAD site. The N-linked (GlcNAc...) asparagine glycan is linked to asparagine 365.

Belongs to the EROs family. As to quaternary structure, may function both as a monomer and a homodimer. FAD is required as a cofactor. Post-translationally, N-glycosylated.

It is found in the endoplasmic reticulum membrane. Functionally, essential oxidoreductase that oxidizes proteins in the endoplasmic reticulum to produce disulfide bonds. Acts by oxidizing directly PDI isomerase through a direct disulfide exchange. Does not act as a direct oxidant of folding substrate, but relies on PDI to transfer oxidizing equivalent. Does not oxidize all PDI related proteins, suggesting that it can discriminate between PDI and related proteins. Its reoxidation probably involves electron transfer to molecular oxygen via FAD. Acts independently of glutathione. May be responsible for a significant proportion of reactive oxygen species (ROS) in the cell, thereby being a source of oxidative stress. This Arabidopsis thaliana (Mouse-ear cress) protein is Endoplasmic reticulum oxidoreductin-1 (AERO1).